Here is a 279-residue protein sequence, read N- to C-terminus: Phosphatidylglycerol--prolipoprotein diacylglyceryl transferase (279 aa).

3 helical membrane passes run Leu18 to Ala38, Ile55 to Gln75, and Ile89 to Ile109. Arg137 contacts a 1,2-diacyl-sn-glycero-3-phospho-(1'-sn-glycerol). A run of 2 helical transmembrane segments spans residues Leu203–Gly223 and Ile235–Tyr255.

The protein belongs to the Lgt family.

The protein resides in the cell membrane. The catalysed reaction is L-cysteinyl-[prolipoprotein] + a 1,2-diacyl-sn-glycero-3-phospho-(1'-sn-glycerol) = an S-1,2-diacyl-sn-glyceryl-L-cysteinyl-[prolipoprotein] + sn-glycerol 1-phosphate + H(+). Its pathway is protein modification; lipoprotein biosynthesis (diacylglyceryl transfer). Functionally, catalyzes the transfer of the diacylglyceryl group from phosphatidylglycerol to the sulfhydryl group of the N-terminal cysteine of a prolipoprotein, the first step in the formation of mature lipoproteins. This chain is Phosphatidylglycerol--prolipoprotein diacylglyceryl transferase, found in Staphylococcus aureus (strain MSSA476).